Here is a 311-residue protein sequence, read N- to C-terminus: Thioredoxin reductase (311 aa).

FAD contacts are provided by residues 15–18 (SGPA), 37–44 (EGTQFGGA), Asn-53, and Val-86. Cys-137 and Cys-140 are disulfide-bonded. Residues Ser-158, His-177, Arg-183, Ile-240, and Tyr-260 each contribute to the NADP(+) site. Residues Asp-280 and 287 to 290 (RQAI) contribute to the FAD site. Arg-287 contacts NADP(+).

The protein belongs to the class-II pyridine nucleotide-disulfide oxidoreductase family. As to quaternary structure, homodimer. It depends on FAD as a cofactor.

The protein localises to the cytoplasm. The catalysed reaction is [thioredoxin]-dithiol + NADP(+) = [thioredoxin]-disulfide + NADPH + H(+). The chain is Thioredoxin reductase from Mycolicibacterium smegmatis (Mycobacterium smegmatis).